Here is a 101-residue protein sequence, read N- to C-terminus: Secreted RxLR effector protein 64 (101 aa).

The N-terminal stretch at 1–23 (MMSPPMTTTLMFILNYAIISFHG) is a signal peptide. The short motif at 48 to 51 (RELR) is the RxLR element. Residues 67–87 (LQPILPLPLCLPFPLVPASIF) traverse the membrane as a helical segment.

The protein belongs to the RxLR effector family.

Its subcellular location is the secreted. It localises to the host cytoplasm. The protein localises to the host nucleus. The protein resides in the membrane. Effector that acts as a broad suppressor of cell death to interrupt plant immunity. Inhibits cell death induced by cell death-inducing proteins, including the PAMP elicitor INF1 from P.infestans. This Plasmopara viticola (Downy mildew of grapevine) protein is Secreted RxLR effector protein 64.